Consider the following 546-residue polypeptide: Cytochrome P450 monooxygenase alnH (546 aa).

Residues 11-31 (VPYSVPLLGSTVVILIGFIAI) form a helical membrane-spanning segment. N-linked (GlcNAc...) asparagine glycosylation is found at Asn-146, Asn-258, and Asn-425. Cys-445 provides a ligand contact to heme.

The protein belongs to the cytochrome P450 family. The cofactor is heme.

The protein resides in the membrane. It functions in the pathway polyketide biosynthesis. Cytochrome P450 monooxygenase; part of the gene cluster that mediates the biosynthesis of asperlin, a polyketide showing anti-inflammatory, antitumor and antibiotic activities. The first step of the asperlin biosynthesis is the production of the intermediate 2,4,6-octatrienoic acid by the highly redusing polyketide synthase alnA with cleavage of the PKS product by the esterase alnB. 2,4,6-octatrienoic acid is further converted to asperlin via several steps involving the remaining enzymes from the cluster. The sequence is that of Cytochrome P450 monooxygenase alnH from Emericella nidulans (strain FGSC A4 / ATCC 38163 / CBS 112.46 / NRRL 194 / M139) (Aspergillus nidulans).